A 1407-amino-acid polypeptide reads, in one-letter code: DNA-directed RNA polymerase subunit beta' (1407 aa).

Residues C70, C72, C85, and C88 each coordinate Zn(2+). Residues D460, D462, and D464 each coordinate Mg(2+). The Zn(2+) site is built by C814, C888, C895, and C898. N6-acetyllysine is present on K972.

This sequence belongs to the RNA polymerase beta' chain family. The RNAP catalytic core consists of 2 alpha, 1 beta, 1 beta' and 1 omega subunit. When a sigma factor is associated with the core the holoenzyme is formed, which can initiate transcription. Mg(2+) is required as a cofactor. Zn(2+) serves as cofactor.

It carries out the reaction RNA(n) + a ribonucleoside 5'-triphosphate = RNA(n+1) + diphosphate. Its function is as follows. DNA-dependent RNA polymerase catalyzes the transcription of DNA into RNA using the four ribonucleoside triphosphates as substrates. This Shigella dysenteriae serotype 1 (strain Sd197) protein is DNA-directed RNA polymerase subunit beta'.